A 205-amino-acid polypeptide reads, in one-letter code: Ephrin-A1 (205 aa).

A signal peptide spans 1–17 (MEFLWAPLLGLCCSLAA). The 134-residue stretch at 18–151 (ADRHIVFWNS…KLKVTVNGKI (134 aa)) folds into the Ephrin RBD domain. A glycan (N-linked (GlcNAc...) asparagine) is linked at N26. 2 cysteine pairs are disulfide-bonded: C51–C92 and C80–C140. A lipid anchor (GPI-anchor amidated serine) is attached at S182. Residues 183-205 (AAPRLFPLVWAVLLLPLLLLQTQ) constitute a propeptide, removed in mature form.

Belongs to the ephrin family. In terms of assembly, monomer. Homodimer. Forms heterodimers with EPHA2. Binds to the receptor tyrosine kinases EPHA2, EPHA3, EPHA4, EPHA5, EPHA6 and EPHA7. Also binds with low affinity to EPHA1. Undergoes proteolysis by a metalloprotease to give rise to a soluble monomeric form. Post-translationally, N-Glycosylation is required for binding to EPHA2 receptor and inducing its internalization.

Its subcellular location is the cell membrane. The protein localises to the secreted. Its function is as follows. Cell surface GPI-bound ligand for Eph receptors, a family of receptor tyrosine kinases which are crucial for migration, repulsion and adhesion during neuronal, vascular and epithelial development. Binds promiscuously Eph receptors residing on adjacent cells, leading to contact-dependent bidirectional signaling into neighboring cells. Plays an important role in angiogenesis and tumor neovascularization. The recruitment of VAV2, VAV3 and PI3-kinase p85 subunit by phosphorylated EPHA2 is critical for EFNA1-induced RAC1 GTPase activation and vascular endothelial cell migration and assembly. Exerts anti-oncogenic effects in tumor cells through activation and down-regulation of EPHA2. Activates EPHA2 by inducing tyrosine phosphorylation which leads to its internalization and degradation. Acts as a negative regulator in the tumorigenesis of gliomas by down-regulating EPHA2 and FAK. Can evoke collapse of embryonic neuronal growth cone and regulates dendritic spine morphogenesis. This chain is Ephrin-A1 (Efna1), found in Rattus norvegicus (Rat).